The primary structure comprises 116 residues: Large ribosomal subunit protein uL18 (116 aa).

This sequence belongs to the universal ribosomal protein uL18 family. Part of the 50S ribosomal subunit; part of the 5S rRNA/L5/L18/L25 subcomplex. Contacts the 5S and 23S rRNAs.

Functionally, this is one of the proteins that bind and probably mediate the attachment of the 5S RNA into the large ribosomal subunit, where it forms part of the central protuberance. In Shewanella woodyi (strain ATCC 51908 / MS32), this protein is Large ribosomal subunit protein uL18.